The primary structure comprises 386 residues: 2-isopropylmalate synthase (386 aa).

One can recognise a Pyruvate carboxyltransferase domain in the interval 15-269; that stretch reads IRIFDTTLRD…ETNVKTWKLY (255 aa). Residues D24, H207, H209, and N243 each contribute to the a divalent metal cation site.

The protein belongs to the alpha-IPM synthase/homocitrate synthase family. Homodimer. Requires a divalent metal cation as cofactor.

The catalysed reaction is 3-methyl-2-oxobutanoate + acetyl-CoA + H2O = (2S)-2-isopropylmalate + CoA + H(+). The protein operates within amino-acid biosynthesis; L-leucine biosynthesis; L-leucine from 3-methyl-2-oxobutanoate: step 1/4. Catalyzes the condensation of the acetyl group of acetyl-CoA with 3-methyl-2-oxobutanoate (2-oxoisovalerate) to form 3-carboxy-3-hydroxy-4-methylpentanoate (2-isopropylmalate). Carries out the first step of the leucine biosynthesis pathway. This chain is 2-isopropylmalate synthase (leuA), found in Saccharolobus solfataricus (strain ATCC 35092 / DSM 1617 / JCM 11322 / P2) (Sulfolobus solfataricus).